A 179-amino-acid chain; its full sequence is Disulfide bond formation protein B (179 aa).

The Cytoplasmic portion of the chain corresponds to 1 to 14 (MLSYFKELSLRRPA). Residues 15–31 (WLLLATLACTLEVTGLY) form a helical membrane-spanning segment. Over 32–49 (FQHKLGLIPCVMCIYERV) the chain is Periplasmic. Cysteines 41 and 44 form a disulfide. The helical transmembrane segment at 50–65 (ALTGLLIAGLIALIAP) threads the bilayer. Topologically, residues 66-72 (NFFLFRW) are cytoplasmic. Residues 73–90 (LALVLWGFSAFKGLSLSI) traverse the membrane as a helical segment. At 91 to 146 (KHYDYQANPSPWNQCEFKPQFPQTIPLDEWFPNIFAAGTVNCSEKQWQMLGWGMPE) the chain is on the periplasmic side. Cysteine 105 and cysteine 132 form a disulfide bridge. Residues 147–165 (WLIVAFSLFMLFFLIVFMS) traverse the membrane as a helical segment. The Cytoplasmic segment spans residues 166 to 179 (QFKRAKPQYRSVFR).

It belongs to the DsbB family.

The protein localises to the cell inner membrane. Functionally, required for disulfide bond formation in some periplasmic proteins. Acts by oxidizing the DsbA protein. This chain is Disulfide bond formation protein B, found in Haemophilus ducreyi (strain 35000HP / ATCC 700724).